A 183-amino-acid chain; its full sequence is ATP synthase subunit b, chloroplastic (183 aa).

The chain crosses the membrane as a helical span at residues 28–48; the sequence is DIFEANVINILLLLFGLIYVL.

Belongs to the ATPase B chain family. F-type ATPases have 2 components, F(1) - the catalytic core - and F(0) - the membrane proton channel. F(1) has five subunits: alpha(3), beta(3), gamma(1), delta(1), epsilon(1). F(0) has four main subunits: a(1), b(1), b'(1) and c(10-14). The alpha and beta chains form an alternating ring which encloses part of the gamma chain. F(1) is attached to F(0) by a central stalk formed by the gamma and epsilon chains, while a peripheral stalk is formed by the delta, b and b' chains.

It localises to the plastid. It is found in the chloroplast thylakoid membrane. F(1)F(0) ATP synthase produces ATP from ADP in the presence of a proton or sodium gradient. F-type ATPases consist of two structural domains, F(1) containing the extramembraneous catalytic core and F(0) containing the membrane proton channel, linked together by a central stalk and a peripheral stalk. During catalysis, ATP synthesis in the catalytic domain of F(1) is coupled via a rotary mechanism of the central stalk subunits to proton translocation. Its function is as follows. Component of the F(0) channel, it forms part of the peripheral stalk, linking F(1) to F(0). The protein is ATP synthase subunit b, chloroplastic of Pyropia yezoensis (Susabi-nori).